Here is a 403-residue protein sequence, read N- to C-terminus: MASQPPPPPKPWETRRIPGAGPGPGPGPTFQSADLGPTLLTRPGQPTLTRVPPPILPRPSQQTGGNNVNTFRPAYSSFSSGYGAYGNAFYGSYSPYSYGYNGLGFNRLRVDDLPPSRFVQQAEESSRGAFQSIESIVHAFASVSMMMDATFSAVYNSFRAVLDVANHFSRLKIHFTKVFSAFALVRTIRYLYRRLQWMMGLRRGSENEDLWAESEGTVACLGAEDQANNSAKSWPIFLFFAVILGGPYLIWKLLSTHSDEVTDSTNWANGEDDHVVARAEYDFAAVSDEEISFRAGDMLNLALKEQQPKVRGWLLASLDGQTTGLIPANYVKILGKRRGRKTVESSTMPKQQQSFTNPTSVKGVTTTNSLEEQEAAFESVFVETNKVAGTPDSTGKNGDKQDL.

Positions 1-11 are enriched in pro residues; it reads MASQPPPPPKP. Residues 1–69 are disordered; sequence MASQPPPPPK…SQQTGGNNVN (69 aa). Residues 1-134 lie on the Peroxisomal matrix side of the membrane; sequence MASQPPPPPK…SSRGAFQSIE (134 aa). Over residues 59–69 the composition is skewed to polar residues; that stretch reads PSQQTGGNNVN. A helical transmembrane segment spans residues 135-155; it reads SIVHAFASVSMMMDATFSAVY. A targeting to peroxisomes region spans residues 145-233; the sequence is MMMDATFSAV…EDQANNSAKS (89 aa). Residues 156–174 are Cytoplasmic-facing; that stretch reads NSFRAVLDVANHFSRLKIH. A helical transmembrane segment spans residues 175–192; sequence FTKVFSAFALVRTIRYLY. The interval 175–196 is interaction with PEX19; that stretch reads FTKVFSAFALVRTIRYLYRRLQ. Residues 193–233 lie on the Peroxisomal matrix side of the membrane; it reads RRLQWMMGLRRGSENEDLWAESEGTVACLGAEDQANNSAKS. The chain crosses the membrane as a helical span at residues 234 to 254; sequence WPIFLFFAVILGGPYLIWKLL. Over 255-403 the chain is Cytoplasmic; the sequence is STHSDEVTDS…TGKNGDKQDL (149 aa). The region spanning 272-336 is the SH3 domain; the sequence is DDHVVARAEY…PANYVKILGK (65 aa). 2 disordered regions span residues 341–364 and 381–403; these read KTVE…VKGV and FVET…KQDL. A compositionally biased stretch (polar residues) spans 344 to 364; sequence ESSTMPKQQQSFTNPTSVKGV.

It belongs to the peroxin-13 family. In terms of assembly, interacts (via SH3 domain) with PEX14 (via SH3-binding motif); forming the PEX13-PEX14 docking complex. Interacts with PEX19.

Its subcellular location is the peroxisome membrane. Component of the PEX13-PEX14 docking complex, a translocon channel that specifically mediates the import of peroxisomal cargo proteins bound to PEX5 receptor. The PEX13-PEX14 docking complex forms a large import pore which can be opened to a diameter of about 9 nm. Mechanistically, PEX5 receptor along with cargo proteins associates with the PEX14 subunit of the PEX13-PEX14 docking complex in the cytosol, leading to the insertion of the receptor into the organelle membrane with the concomitant translocation of the cargo into the peroxisome matrix. Involved in the import of PTS1- and PTS2-type containing proteins. This chain is Peroxisomal membrane protein PEX13, found in Rattus norvegicus (Rat).